The primary structure comprises 500 residues: MSPAPPPCGFAEAESTNTKSAPKFRSACNACHEVKLKCLGGQPCARCRNKQVECVYSHAARIGKPKGSRNKKTLERLRQAKAMSRPEETQGEETTSLTAVDASQAINCRALSGSTRRDSSPLPPPHSDTDSAEGGAEEELLDQEERDEAEKPPLVENPPNLNPLEQISPPREDFLDLLAHSSLLNNTQHDLQHPTADMVPDGLAGFPHASTSAADDLSWMTSPTKSLLSTTFPAIEDDLQDLQDPFLCSSWRSACLPPSSSRSSFHFPRFNHFAEDTMGLEYASGMDATRSLGDPPHAMARAGSFSTSGPGSSQEGSHFLSSRHSQSSGMYQPVPKRPSCSCLKLQASALCRIHLVDRSHADMRGDTVLATASTILDSCNALILCPSCATDYKFLLLAIMTVRILLCWLRGLSATRTQNDNANMKLTLGEYEISGEEEAIIKNMLVSRALEKVKIAVRRLRERVNSITIQEVGNCSESTQRWDLTYIRMCLDHMEKQVGC.

A DNA-binding region (zn(2)-C6 fungal-type) is located at residues 28-54 (CNACHEVKLKCLGGQPCARCRNKQVEC). A compositionally biased stretch (basic and acidic residues) spans 79-88 (QAKAMSRPEE). 2 disordered regions span residues 79-168 (QAKA…EQIS) and 302-332 (AGSFSTSGPGSSQEGSHFLSSRHSQSSGMYQ). A compositionally biased stretch (acidic residues) spans 135-147 (GAEEELLDQEERD). Residues 154-165 (LVENPPNLNPLE) show a composition bias toward low complexity. Residues 304–316 (SFSTSGPGSSQEG) show a composition bias toward polar residues. Residues 317–328 (SHFLSSRHSQSS) are compositionally biased toward low complexity.

It localises to the nucleus. In terms of biological role, transcription factor that regulates sirodesmin production and contributes to virulence. Probably binds to the consensus motif TCGGN(3)CCGA found in the promoters of sirT, sirP, sirO, sirN, sirP, sirB, sirR, sirJ and sirQ. This is C6 finger domain transcription factor sirZ from Leptosphaeria maculans (Blackleg fungus).